The chain runs to 127 residues: Glycine cleavage system H protein (127 aa).

The 82-residue stretch at 22 to 103 (EAYIGITDFA…AFANWIIKVE (82 aa)) folds into the Lipoyl-binding domain. Lys63 bears the N6-lipoyllysine mark.

The protein belongs to the GcvH family. In terms of assembly, the glycine cleavage system is composed of four proteins: P, T, L and H. (R)-lipoate serves as cofactor.

In terms of biological role, the glycine cleavage system catalyzes the degradation of glycine. The H protein shuttles the methylamine group of glycine from the P protein to the T protein. The polypeptide is Glycine cleavage system H protein (Alkaliphilus oremlandii (strain OhILAs) (Clostridium oremlandii (strain OhILAs))).